The chain runs to 101 residues: Urease subunit beta (101 aa).

This sequence belongs to the urease beta subunit family. As to quaternary structure, heterotrimer of UreA (gamma), UreB (beta) and UreC (alpha) subunits. Three heterotrimers associate to form the active enzyme.

It is found in the cytoplasm. It catalyses the reaction urea + 2 H2O + H(+) = hydrogencarbonate + 2 NH4(+). It functions in the pathway nitrogen metabolism; urea degradation; CO(2) and NH(3) from urea (urease route): step 1/1. The protein is Urease subunit beta of Polaromonas naphthalenivorans (strain CJ2).